The following is a 302-amino-acid chain: Zygote arrest protein 2.S (302 aa).

Disordered stretches follow at residues 15-46, 88-117, and 138-195; these read YGGN…SEPP, VDTG…PTDC, and LPQG…EPNK. Residues 159 to 178 show a composition bias toward basic and acidic residues; the sequence is LKDRGPSPEEKEPETKEALE. The segment at 203-288 adopts a 3CxxC-type zinc-finger fold; that stretch reads QKYGYFHCKD…QELCGRCKNK (86 aa).

This sequence belongs to the ZAR1 family. As to expression, oocyte-specific.

It is found in the cytoplasm. The protein resides in the cytoplasmic ribonucleoprotein granule. In terms of biological role, mRNA-binding protein required for maternal mRNA storage, translation and degradation during oocyte maturation. Probably promotes formation of some phase-separated membraneless compartment that stores maternal mRNAs in oocytes: acts by undergoing liquid-liquid phase separation upon binding to maternal mRNAs. Binds to the 3'-UTR of maternal mRNAs, inhibiting their translation. The polypeptide is Zygote arrest protein 2.S (Xenopus laevis (African clawed frog)).